The primary structure comprises 273 residues: Acetyl-coenzyme A carboxylase carboxyl transferase subunit alpha (273 aa).

One can recognise a CoA carboxyltransferase C-terminal domain in the interval 1 to 244 (MKKATQSKAW…KVVLKQALDE (244 aa)).

Belongs to the AccA family. In terms of assembly, acetyl-CoA carboxylase is a heterohexamer composed of biotin carboxyl carrier protein (AccB), biotin carboxylase (AccC) and two subunits each of ACCase subunit alpha (AccA) and ACCase subunit beta (AccD).

It localises to the cytoplasm. The enzyme catalyses N(6)-carboxybiotinyl-L-lysyl-[protein] + acetyl-CoA = N(6)-biotinyl-L-lysyl-[protein] + malonyl-CoA. It participates in lipid metabolism; malonyl-CoA biosynthesis; malonyl-CoA from acetyl-CoA: step 1/1. Its function is as follows. Component of the acetyl coenzyme A carboxylase (ACC) complex. First, biotin carboxylase catalyzes the carboxylation of biotin on its carrier protein (BCCP) and then the CO(2) group is transferred by the carboxyltransferase to acetyl-CoA to form malonyl-CoA. The protein is Acetyl-coenzyme A carboxylase carboxyl transferase subunit alpha of Acinetobacter baumannii (strain AB0057).